The chain runs to 868 residues: Probable inorganic carbon transporter subunit DabA (868 aa).

Cys392, Asp394, His574, and Cys589 together coordinate Zn(2+).

The protein belongs to the inorganic carbon transporter (TC 9.A.2) DabA family. In terms of assembly, forms a complex with DabB. Zn(2+) is required as a cofactor.

It is found in the cell membrane. Its function is as follows. Part of an energy-coupled inorganic carbon pump. The chain is Probable inorganic carbon transporter subunit DabA from Bacillus cereus (strain B4264).